A 481-amino-acid chain; its full sequence is Protein NRT1/ PTR FAMILY 1.3 (481 aa).

A run of 12 helical transmembrane segments spans residues 32-52, 57-77, 88-108, 124-144, 173-193, 202-222, 259-279, 302-322, 333-353, 374-394, 422-442, and 451-471; these read LAYFGLVPNMILFLTVEYGMG, ANILFLWSAATNFFPLVGAFI, IGFGSSISLTGMVLLWLTTII, LLKSVLLYSFFALTAIGAGGV, FNWYYFSVMVACFLSQSLLVF, IGFGVSVAAMALSVALFFAAS, IWSTGIILSLVTACQVSFIVL, IFLVISFLLFLGLYDLVIVPL, LGVMVRMWAGYVISVLCISAL, AMWLLPYMILGGIAEALNTIA, ASLISSWIITIVDVTTYGSWI, and LDYYYWLLVGLSLLNVLYFVW.

This sequence belongs to the major facilitator superfamily. Proton-dependent oligopeptide transporter (POT/PTR) (TC 2.A.17) family. As to expression, expressed in roots.

It is found in the membrane. In Arabidopsis thaliana (Mouse-ear cress), this protein is Protein NRT1/ PTR FAMILY 1.3 (NPF1.3).